The primary structure comprises 412 residues: Putative competence-damage inducible protein (412 aa).

Belongs to the CinA family.

The polypeptide is Putative competence-damage inducible protein (Bacillus cereus (strain AH187)).